Here is a 297-residue protein sequence, read N- to C-terminus: Internalin C (297 aa).

The first 34 residues, 1-34 (MLKKNNWLQNAVIAMLVLIVGLCINMGSGTKVQA), serve as a signal peptide directing secretion. LRR repeat units lie at residues 74 to 96 (LSGV…MQFF), 97 to 120 (TNLK…DLTK), 122 to 139 (EELS…GIPS), 140 to 161 (ACLS…LIHL), 162 to 184 (KNLE…GFLS), and 186 to 207 (LEVL…RLKK).

The protein belongs to the internalin family. As to quaternary structure, interacts in vitro with human intestinal mucin-2 (MUC2) but not with mucin-1; binding is slightly better at pH 5.5, (the pH of the intestine) than at pH 7.4. Interacts with the SH3 6 domain of human DNMBP (Tuba). Interacts with I-kappa-B kinase alpha (IKKA, CHUK).

It localises to the secreted. It is found in the host cytoplasm. Functionally, a virulence enhancer that has at least 2 dissociable functions in infection; it impairs translocation of host transcription factor NF-kappa-B to the nucleus and antagonizes the function of the Tuba dynamin-binding protein, promoting bacterial spreading. Perturbs the morphology of host cell junctions by impairing host DNMBP (Tuba) and WASL interaction, altering cortical tension at the cell junctions and allowing bacteria to more efficiently form bacteria-filled cell protrusions which promote bacterial spreading within infected host tissue. Down-regulates the host inflammation response usually induced by Listeria infection. Interacts with host I-kappa-B kinase alpha (IKKA, CHUK), which prevents IKKA from phosphorylating NF-kappa-B inhibitor alpha (IKBA, NFKBIA) and thus delays degradation of phospho-IKBA. Translocation of host transcription factor p65 (a subunit of NF-kappa-B, RELA) into the nucleus is impaired, which prevents activation of NF-KB-regulated genes. Recognized by serum from healthy humans exposed to L.monocytogenes as well from patients who have recovered from listeriosis. In Listeria monocytogenes serotype 1/2a (strain EGD / Mackaness), this protein is Internalin C.